Consider the following 874-residue polypeptide: Ectonucleotide pyrophosphatase/phosphodiesterase family member 3 (874 aa).

The Cytoplasmic portion of the chain corresponds to 1–11; it reads MDSRLALATEE. Residues 12–30 form a helical; Signal-anchor for type II membrane protein membrane-spanning segment; that stretch reads PIKKDSLKKYKILCVVLLA. Residues 31-874 are Extracellular-facing; it reads LLVIVSLGLG…TYLPTFETII (844 aa). SMB domains follow at residues 51-93 and 94-138; these read QGSC…VKST and QIWT…GESP. Cystine bridges form between cysteine 54–cysteine 58, cysteine 54–cysteine 71, cysteine 58–cysteine 89, cysteine 69–cysteine 71, cysteine 69–cysteine 82, cysteine 75–cysteine 81, cysteine 82–cysteine 89, cysteine 98–cysteine 115, cysteine 103–cysteine 133, cysteine 113–cysteine 126, cysteine 119–cysteine 125, cysteine 144–cysteine 190, and cysteine 152–cysteine 364. The Cell attachment site signature appears at 78 to 80; it reads RGD. The segment at 160-544 is phosphodiesterase; the sequence is PVILFSMDGF…HGSLNHLLKT (385 aa). Aspartate 167 contacts Zn(2+). Residue lysine 204 coordinates ATP. Threonine 205 is a Zn(2+) binding site. Threonine 205 acts as the Nucleophile in catalysis. Position 226 (asparagine 226) interacts with ATP. Asparagine 236 carries an N-linked (GlcNAc...) asparagine glycan. Residue aspartate 275 participates in ATP binding. N-linked (GlcNAc...) asparagine glycosylation is found at asparagine 279 and asparagine 288. Position 289 (tyrosine 289) interacts with ATP. Aspartate 325, histidine 329, aspartate 372, and histidine 373 together coordinate Zn(2+). 6 cysteine pairs are disulfide-bonded: cysteine 380–cysteine 477, cysteine 428–cysteine 817, cysteine 561–cysteine 623, cysteine 574–cysteine 679, cysteine 576–cysteine 664, and cysteine 786–cysteine 796. Residue asparagine 425 is glycosylated (N-linked (GlcNAc...) asparagine). Histidine 482 serves as a coordination point for Zn(2+). Asparagine 532, asparagine 594, asparagine 687, and asparagine 701 each carry an N-linked (GlcNAc...) asparagine glycan. Positions 581-874 are nuclease; it reads NTPGLEEQAN…TYLPTFETII (294 aa). Residues aspartate 751, asparagine 753, aspartate 755, histidine 757, and aspartate 759 each coordinate Ca(2+). N-linked (GlcNAc...) asparagine glycosylation occurs at asparagine 820.

In terms of assembly, monomer and homodimer. It depends on Zn(2+) as a cofactor. In terms of processing, N-glycosylated. N-glycosylation is necessary for normal transport to the cell membrane, but is not the apical targeting signal. As to expression, detected at the tip of villi in the small intestine. Detected on basophils and mast cells (at protein level). Detected in the epithelial layer of the small intestine; expression is higher in the proximal part and lower in the distal part of the small intestine.

It localises to the cell membrane. The protein resides in the apical cell membrane. It is found in the secreted. It carries out the reaction a ribonucleoside 5'-triphosphate + H2O = a ribonucleoside 5'-phosphate + diphosphate + H(+). The enzyme catalyses UDP-N-acetyl-alpha-D-glucosamine + H2O = N-acetyl-alpha-D-glucosamine 1-phosphate + UMP + 2 H(+). The catalysed reaction is ATP + H2O = AMP + diphosphate + H(+). It catalyses the reaction CTP + H2O = CMP + diphosphate + H(+). It carries out the reaction GTP + H2O = GMP + diphosphate + H(+). The enzyme catalyses UTP + H2O = UMP + diphosphate + H(+). The catalysed reaction is Hydrolytically removes 5'-nucleotides successively from the 3'-hydroxy termini of 3'-hydroxy-terminated oligonucleotides.. It catalyses the reaction P(1),P(3)-bis(5'-adenosyl) triphosphate + H2O = AMP + ADP + 2 H(+). It carries out the reaction P(1),P(4)-bis(5'-adenosyl) tetraphosphate + H2O = AMP + ATP + 2 H(+). The enzyme catalyses P(1),P(5)-bis(5'-adenosyl) pentaphosphate + H2O = adenosine 5'-tetraphosphate + AMP + 2 H(+). The catalysed reaction is P(1),P(4)-bis(5'-guanosyl) tetraphosphate + H2O = GMP + GTP + 2 H(+). Its function is as follows. Hydrolase that metabolizes extracellular nucleotides, including ATP, GTP, UTP and CTP. Limits mast cells and basophils response during inflammation and during the chronic phases of allergic responses by eliminating extracellular ATP, a signaling molecule activating these cells in an autocrine manner. Metabolizes extracellular ATP in the lumen of the small intestine, and thereby prevents ATP-induced apoptosis of intestinal plasmacytoid dendritic cells. Has a broad specificity and can also hydrolyze UDP-GlcNAc into UMP and GlcNAc-1-phosphate and potentially several other intracellular nucleotide sugars, including UDP-GalNAc, CMP-NeuAc, GDP-Fuc, and UDP-GlcA. Thereby, could modulate glycan biosynthesis and protein glycosylation. Can hydrolyze extracellular dinucleoside polyphosphates, including the vasoactive adenosine polyphosphates as well. In addition, displays an alkaline phosphodiesterase activity in vitro. This chain is Ectonucleotide pyrophosphatase/phosphodiesterase family member 3, found in Mus musculus (Mouse).